Consider the following 265-residue polypeptide: Asparagine-rich protein (265 aa).

Positions 1–21 (MSRLTLLVLLVIAAVIQKVHG) are cleaved as a signal peptide. Disordered stretches follow at residues 20-71 (HGQG…NRNI) and 88-183 (SNQN…NQQY). Basic and acidic residues-rich tracts occupy residues 22 to 35 (QGRE…HEPG) and 44 to 55 (EKTERNLREPNR). Residues 88–98 (SNQNNFGNNRS) show a composition bias toward low complexity. The segment covering 115–124 (NKSEVEKENG) has biased composition (basic and acidic residues). Residues 152-166 (KVQHRIAKRFQKRHP) are compositionally biased toward basic residues.

Nacreous layer of shell (at protein level). Expressed primarily in the mantle with highest level in the mantle pallium and lower level in the mantle edge.

It localises to the secreted. This chain is Asparagine-rich protein, found in Pinctada maxima (Silver-lipped pearl oyster).